An 80-amino-acid chain; its full sequence is Small ribosomal subunit protein uS17 (80 aa).

The protein belongs to the universal ribosomal protein uS17 family. Part of the 30S ribosomal subunit.

In terms of biological role, one of the primary rRNA binding proteins, it binds specifically to the 5'-end of 16S ribosomal RNA. The polypeptide is Small ribosomal subunit protein uS17 (Microcystis aeruginosa (strain NIES-843 / IAM M-2473)).